A 353-amino-acid polypeptide reads, in one-letter code: Nicotinate-nucleotide--dimethylbenzimidazole phosphoribosyltransferase (353 aa).

Glu319 serves as the catalytic Proton acceptor.

It belongs to the CobT family.

It catalyses the reaction 5,6-dimethylbenzimidazole + nicotinate beta-D-ribonucleotide = alpha-ribazole 5'-phosphate + nicotinate + H(+). The protein operates within nucleoside biosynthesis; alpha-ribazole biosynthesis; alpha-ribazole from 5,6-dimethylbenzimidazole: step 1/2. In terms of biological role, catalyzes the synthesis of alpha-ribazole-5'-phosphate from nicotinate mononucleotide (NAMN) and 5,6-dimethylbenzimidazole (DMB). In Prosthecochloris aestuarii (strain DSM 271 / SK 413), this protein is Nicotinate-nucleotide--dimethylbenzimidazole phosphoribosyltransferase.